A 218-amino-acid polypeptide reads, in one-letter code: Molybdenum cofactor guanylyltransferase (218 aa).

GTP is bound by residues 16–18 (LAG), lysine 28, asparagine 56, aspartate 74, and aspartate 109. Aspartate 109 contacts Mg(2+).

This sequence belongs to the MobA family. Monomer. The cofactor is Mg(2+).

The protein localises to the cytoplasm. The catalysed reaction is Mo-molybdopterin + GTP + H(+) = Mo-molybdopterin guanine dinucleotide + diphosphate. Functionally, transfers a GMP moiety from GTP to Mo-molybdopterin (Mo-MPT) cofactor (Moco or molybdenum cofactor) to form Mo-molybdopterin guanine dinucleotide (Mo-MGD) cofactor. This is Molybdenum cofactor guanylyltransferase from Rhizobium meliloti (strain 1021) (Ensifer meliloti).